A 246-amino-acid chain; its full sequence is Small ribosomal subunit protein uS2 (246 aa).

Belongs to the universal ribosomal protein uS2 family.

This is Small ribosomal subunit protein uS2 from Burkholderia vietnamiensis (strain G4 / LMG 22486) (Burkholderia cepacia (strain R1808)).